Reading from the N-terminus, the 237-residue chain is 2,3-bisphosphoglycerate-dependent phosphoglycerate mutase (237 aa).

Substrate contacts are provided by residues 8 to 15 (RHGQSAWN), 21 to 22 (TG), arginine 60, 87 to 90 (ERHY), lysine 98, 114 to 115 (RR), and 180 to 181 (GN). Histidine 9 serves as the catalytic Tele-phosphohistidine intermediate. Glutamate 87 acts as the Proton donor/acceptor in catalysis.

This sequence belongs to the phosphoglycerate mutase family. BPG-dependent PGAM subfamily. Homodimer.

The enzyme catalyses (2R)-2-phosphoglycerate = (2R)-3-phosphoglycerate. The protein operates within carbohydrate degradation; glycolysis; pyruvate from D-glyceraldehyde 3-phosphate: step 3/5. In terms of biological role, catalyzes the interconversion of 2-phosphoglycerate and 3-phosphoglycerate. In Hyphomonas neptunium (strain ATCC 15444), this protein is 2,3-bisphosphoglycerate-dependent phosphoglycerate mutase.